The sequence spans 79 residues: Small ribosomal subunit protein bS18c (79 aa).

It belongs to the bacterial ribosomal protein bS18 family. As to quaternary structure, part of the 30S ribosomal subunit.

The protein localises to the plastid. It localises to the chloroplast. The protein is Small ribosomal subunit protein bS18c of Chaetosphaeridium globosum (Charophycean green alga).